The sequence spans 721 residues: Cell wall protein RBT1 (721 aa).

The signal sequence occupies residues 1-20 (MRFATAQLAALAYYILSTEA). Residues 55 to 278 (GSKNKREAEI…DCQCDTPSPS (224 aa)) enclose the Flo11 domain. Disordered regions lie at residues 278-410 (STTT…LTTT), 453-510 (LTET…TVTE), and 555-666 (TPAT…ALVS). Over residues 454-499 (TETTPVPSSVDSTSVTSAPETTPESTAPESSAPESSAPESSAPVTE) the composition is skewed to low complexity. Residues 500 to 510 (TPTGPVSTVTE) are compositionally biased toward polar residues. Low complexity-rich tracts occupy residues 555–575 (TPATESASESSAPATESVPAT) and 584–663 (SSAP…KTSA). A lipid anchor (GPI-anchor amidated serine) is attached at Ser-696. Positions 697 to 721 (SFEGAGNNMRLTYGAAIIGLAAFLI) are cleaved as a propeptide — removed in mature form.

It belongs to the HWP1 family. The GPI-anchor is attached to the protein in the endoplasmic reticulum and serves to target the protein to the cell surface. There, the glucosamine-inositol phospholipid moiety is cleaved off and the GPI-modified mannoprotein is covalently attached via its lipidless GPI glycan remnant to the 1,6-beta-glucan of the outer cell wall layer.

The protein resides in the secreted. Its subcellular location is the cell wall. It is found in the membrane. Functionally, GPI-anchored cell wall protein required for mating efficiency, biofilm formation, and virulence. Involved in normal disseminated infection, but not in intestinal colonization. This is Cell wall protein RBT1 (RBT1) from Candida albicans (strain SC5314 / ATCC MYA-2876) (Yeast).